A 118-amino-acid chain; its full sequence is MTREQDLGRRGEEIAAQHLIGRGYTLVERNWRCREGEIDLVMTHAGTTVLVEVKTRAGLGYGHPLEAVTRAKASRLRVLAGLWCQAHPDRRGPVRIDVVGVLWPRGGQPSVEVVRSAC.

This sequence belongs to the UPF0102 family.

This is UPF0102 protein CMM_1377 from Clavibacter michiganensis subsp. michiganensis (strain NCPPB 382).